A 58-amino-acid polypeptide reads, in one-letter code: Ferredoxin-2 (58 aa).

2 4Fe-4S ferredoxin-type domains span residues I2–E27 and K30–S58. C8 is a binding site for [3Fe-4S] cluster. C11 carries the post-translational modification Cysteine methyl disulfide. C14 provides a ligand contact to [3Fe-4S] cluster. An intrachain disulfide couples C18 to C42. C50 lines the [3Fe-4S] cluster pocket.

As to quaternary structure, homodimer (ferredoxin I) or homotetramer (ferredoxin II). The cofactor is [3Fe-4S] cluster. Requires [4Fe-4S] cluster as cofactor.

Its function is as follows. Ferredoxins are iron-sulfur proteins that transfer electrons in a wide variety of metabolic reactions. The chain is Ferredoxin-2 from Megalodesulfovibrio gigas (Desulfovibrio gigas).